Reading from the N-terminus, the 202-residue chain is Peptide deformylase 2 (202 aa).

Residues Cys123 and His165 each contribute to the Fe cation site. Glu166 is an active-site residue. His169 is a Fe cation binding site.

The protein belongs to the polypeptide deformylase family. Fe(2+) is required as a cofactor.

The enzyme catalyses N-terminal N-formyl-L-methionyl-[peptide] + H2O = N-terminal L-methionyl-[peptide] + formate. Its function is as follows. Removes the formyl group from the N-terminal Met of newly synthesized proteins. Requires at least a dipeptide for an efficient rate of reaction. N-terminal L-methionine is a prerequisite for activity but the enzyme has broad specificity at other positions. This is Peptide deformylase 2 from Vibrio vulnificus (strain YJ016).